The following is a 138-amino-acid chain: Large ribosomal subunit protein eL32 (138 aa).

The protein belongs to the eukaryotic ribosomal protein eL32 family.

The protein is Large ribosomal subunit protein eL32 (rpl32e) of Saccharolobus solfataricus (strain ATCC 35092 / DSM 1617 / JCM 11322 / P2) (Sulfolobus solfataricus).